The following is a 334-amino-acid chain: Fe-S cluster assembly protein DRE2 (334 aa).

An N-terminal SAM-like domain region spans residues 1 to 131; the sequence is MASTKTGLVL…ASIKAEPVAV (131 aa). Residues 132-228 form a linker region; the sequence is PLRNHKKTTT…EDELVDENEM (97 aa). The tract at residues 135–229 is disordered; it reads NHKKTTTPGT…DELVDENEMR (95 aa). Over residues 140–150 the composition is skewed to low complexity; that stretch reads TTPGTTTTAKK. 2 stretches are compositionally biased toward acidic residues: residues 182-192 and 215-227; these read DSEDEDEESEG and DSIE…DENE. The [2Fe-2S] cluster site is built by cysteine 238, cysteine 249, cysteine 252, and cysteine 254. The interval 238–254 is fe-S binding site A; that stretch reads CGKSKTRRRKACKDCTC. Positions 297, 300, 308, and 311 each coordinate [4Fe-4S] cluster. 2 short sequence motifs (cx2C motif) span residues 297 to 300 and 308 to 311; these read CGSC and CSGC. The fe-S binding site B stretch occupies residues 297–311; that stretch reads CGSCTLGDAFRCSGC.

It belongs to the anamorsin family. Monomer. Interacts with TAH18. Interacts with MIA40. [2Fe-2S] cluster is required as a cofactor. It depends on [4Fe-4S] cluster as a cofactor.

The protein resides in the cytoplasm. It localises to the mitochondrion intermembrane space. In terms of biological role, component of the cytosolic iron-sulfur (Fe-S) protein assembly (CIA) machinery required for the maturation of extramitochondrial Fe-S proteins. Part of an electron transfer chain functioning in an early step of cytosolic Fe-S biogenesis, facilitating the de novo assembly of a [4Fe-4S] cluster on the scaffold complex CFD1-NBP35. Electrons are transferred to DRE2 from NADPH via the FAD- and FMN-containing protein TAH18. TAH18-DRE2 are also required for the assembly of the diferric tyrosyl radical cofactor of ribonucleotide reductase (RNR), probably by providing electrons for reduction during radical cofactor maturation in the catalytic small subunit RNR2. This is Fe-S cluster assembly protein DRE2 from Zygosaccharomyces rouxii (strain ATCC 2623 / CBS 732 / NBRC 1130 / NCYC 568 / NRRL Y-229).